The following is a 543-amino-acid chain: Putative fatty acyl-CoA reductase CG8303 (543 aa).

Positions 1–29 are disordered; sequence MAVITEHGGTTSSPPENNNSIGNGKHRVN. A compositionally biased stretch (polar residues) spans 8–22; sequence GGTTSSPPENNNSIG. 3 helical membrane passes run 386–406, 500–520, and 522–542; these read LFFY…EKLF, VFNV…YFAL, and LTLG…FLVW.

This sequence belongs to the fatty acyl-CoA reductase family.

It localises to the membrane. It catalyses the reaction a long-chain fatty acyl-CoA + 2 NADPH + 2 H(+) = a long-chain primary fatty alcohol + 2 NADP(+) + CoA. It carries out the reaction hexadecanoyl-CoA + 2 NADPH + 2 H(+) = hexadecan-1-ol + 2 NADP(+) + CoA. The catalysed reaction is octadecanoyl-CoA + 2 NADPH + 2 H(+) = octadecan-1-ol + 2 NADP(+) + CoA. Functionally, catalyzes the reduction of C16 or C18 fatty acyl-CoA to fatty alcohols. The polypeptide is Putative fatty acyl-CoA reductase CG8303 (Drosophila melanogaster (Fruit fly)).